We begin with the raw amino-acid sequence, 40 residues long: Spodomicin (40 aa).

Disulfide bonds link C6-C20, C10-C32, and C21-C39.

As to quaternary structure, monomer. Post-translationally, contains three disulfide bonds. As to expression, hemolymph.

Its subcellular location is the secreted. Functionally, fungicide. This is Spodomicin from Spodoptera littoralis (Egyptian cotton leafworm).